A 247-amino-acid chain; its full sequence is Adenosylcobinamide-GDP ribazoletransferase (247 aa).

Transmembrane regions (helical) follow at residues 31–51 (VVWFPAAGLVVGAAVALAAAL), 57–77 (PWLGALAGVVMWAWITGGLHL), 109–129 (FGVIVLVLQLAAKLVLLHWLL), 136–156 (PALVLIPAWTRWAAAGWTLLL), 189–209 (ITPIAFVALIPAVLWGVWMWL), and 218–238 (ILGAGIEWSESAALLLAGVSL).

This sequence belongs to the CobS family. Requires Mg(2+) as cofactor.

The protein resides in the cell inner membrane. The enzyme catalyses alpha-ribazole + adenosylcob(III)inamide-GDP = adenosylcob(III)alamin + GMP + H(+). It carries out the reaction alpha-ribazole 5'-phosphate + adenosylcob(III)inamide-GDP = adenosylcob(III)alamin 5'-phosphate + GMP + H(+). Its pathway is cofactor biosynthesis; adenosylcobalamin biosynthesis; adenosylcobalamin from cob(II)yrinate a,c-diamide: step 7/7. Functionally, joins adenosylcobinamide-GDP and alpha-ribazole to generate adenosylcobalamin (Ado-cobalamin). Also synthesizes adenosylcobalamin 5'-phosphate from adenosylcobinamide-GDP and alpha-ribazole 5'-phosphate. In Thiobacillus denitrificans (strain ATCC 25259 / T1), this protein is Adenosylcobinamide-GDP ribazoletransferase.